The primary structure comprises 134 residues: Pre-histone-like nucleoprotein (134 aa).

The propeptide occupies 2 to 23 (AILISPTNNTGWGLGTHKLFGG). Residues 40–62 (RASWGSKGRRRRQGRARGAPLDP) are disordered. The short motif at 125–134 (KRKRRVRFRQ) is the Nuclear localization signal element.

This sequence belongs to the adenoviridae histone-like nucleoprotein family. As to quaternary structure, interacts with the core-capsid bridging protein; this interaction bridges the virus core to the capsid. Interacts with host NPM1; this interaction might play a role in placing the pre-histone-like nucleoprotein on the viral DNA or regulating viral gene expression. Interacts with host HMGB1; this interaction inhibits host immune response. Cleaved near the N-terminus by the viral protease during virion maturation to form the mature protein.

It localises to the virion. The protein localises to the host nucleus. Its subcellular location is the host nucleolus. In terms of biological role, plays a role in the inhibition of host immune response within the nucleus. Interacts with cellular nucleosomes and immobilizes the host immune danger signal HMGB1 on chromatin. In turn, prevents HMGB1 release out of the cell and thus decreases inflammation. Also plays a role in the wrapping and condensation of the viral DNA. May also promote viral genome import into the nucleus. The chain is Pre-histone-like nucleoprotein from Canis lupus familiaris (Dog).